We begin with the raw amino-acid sequence, 296 residues long: 4-hydroxybenzoate octaprenyltransferase (296 aa).

8 helical membrane passes run 28 to 48 (IGTL…SDGI), 51 to 71 (LAVL…GCVI), 102 to 122 (LLLT…LNHL), 143 to 163 (FFPI…PMAF), 174 to 194 (AWIL…VYAM), 212 to 232 (FGRY…LLMA), 233 to 253 (VLGA…IVLL), and 274 to 294 (FLAN…HTFF).

This sequence belongs to the UbiA prenyltransferase family. Requires Mg(2+) as cofactor.

Its subcellular location is the cell inner membrane. The catalysed reaction is all-trans-octaprenyl diphosphate + 4-hydroxybenzoate = 4-hydroxy-3-(all-trans-octaprenyl)benzoate + diphosphate. The protein operates within cofactor biosynthesis; ubiquinone biosynthesis. Its function is as follows. Catalyzes the prenylation of para-hydroxybenzoate (PHB) with an all-trans polyprenyl group. Mediates the second step in the final reaction sequence of ubiquinone-8 (UQ-8) biosynthesis, which is the condensation of the polyisoprenoid side chain with PHB, generating the first membrane-bound Q intermediate 3-octaprenyl-4-hydroxybenzoate. This is 4-hydroxybenzoate octaprenyltransferase from Neisseria meningitidis serogroup B (strain ATCC BAA-335 / MC58).